A 129-amino-acid polypeptide reads, in one-letter code: F(420)H(2) dehydrogenase subunit A (129 aa).

3 helical membrane-spanning segments follow: residues 9 to 29 (IIDS…MPPM), 64 to 84 (FNVE…EVLF), and 95 to 115 (HGIT…LLFG).

Belongs to the complex I subunit 3 family. The FPO complex is composed of at least 13 different subunits. FpoA, FpoH, FpoJ, FpoK, FpoL, FpoM and FpoN proteins constitute the membrane sector of the complex.

The protein localises to the cell membrane. The catalysed reaction is methanophenazine + reduced coenzyme F420-(gamma-L-Glu)(n) = dihydromethanophenazine + oxidized coenzyme F420-(gamma-L-Glu)(n) + H(+). Functionally, component of the F(420)H(2) dehydrogenase (FPO complex) which is part of the energy-conserving F(420)H(2):heterodisulfide oxidoreductase system. The membrane-bound electron transfer system of the complex plays an important role in the metabolism of methylotrophic methanogens when the organisms grow on methanol or methylamines. Catalyzes the oxidation of methanophenazine to dihydromethanophenazine. It shuttles electrons from F(420)H(2), via FAD and iron-sulfur (Fe-S) centers, to methanophenazine (an electron carrier in the membrane). It couples the redox reaction to proton translocation (for every two electrons transferred, two hydrogen ions are translocated across the cytoplasmic membrane), and thus conserves the redox energy in a proton gradient. It also catalyzes the oxidation of F(420)H(2) with quinones such as 2,3-dimethyl-1,4-naphthoquinone, 2-methyl-1,4-naphthoquinone and tetramethyl-p-benzoquinone. The protein is F(420)H(2) dehydrogenase subunit A (fpoA) of Methanosarcina mazei (strain ATCC BAA-159 / DSM 3647 / Goe1 / Go1 / JCM 11833 / OCM 88) (Methanosarcina frisia).